The sequence spans 529 residues: Intraflagellar transport protein 56 (529 aa).

Positions 1 to 21 (MLHNRMTTAFERSKEQEHEAA) are disordered. Positions 11-21 (ERSKEQEHEAA) are enriched in basic and acidic residues. TPR repeat units lie at residues 57–90 (GNAD…KNPP), 154–187 (SADQ…QPEC), 189–221 (AIYM…AEDS), 285–321 (SEAR…EYTL), 359–392 (VLGR…PKES), and 428–461 (PVHR…SLQT).

This sequence belongs to the IFT56 family.

The protein resides in the cell projection. Its subcellular location is the cilium. The protein localises to the flagellum. It localises to the cytoplasm. It is found in the cytoskeleton. The protein resides in the flagellum axoneme. Its subcellular location is the flagellum basal body. In terms of biological role, component of the intraflagellar transport complex B (IFT-B) involved in flagellar assembly. The polypeptide is Intraflagellar transport protein 56 (Giardia intestinalis (strain ATCC 50803 / WB clone C6) (Giardia lamblia)).